The primary structure comprises 343 residues: Putative adenosine/adenine deaminase (343 aa).

Residues H16, H18, and H204 each coordinate Zn(2+). H18 serves as a coordination point for substrate. Residue E207 is the Proton donor of the active site. Position 285 (D285) interacts with Zn(2+). D286 contacts substrate.

This sequence belongs to the metallo-dependent hydrolases superfamily. Adenosine and AMP deaminases family. Zn(2+) is required as a cofactor.

Functionally, putative nucleoside deaminase. May catalyze the hydrolytic deamination of adenosine or some similar substrate and play a role in purine metabolism. This Streptomyces coelicolor (strain ATCC BAA-471 / A3(2) / M145) protein is Putative adenosine/adenine deaminase.